An 875-amino-acid polypeptide reads, in one-letter code: Alanine--tRNA ligase (875 aa).

The Zn(2+) site is built by histidine 565, histidine 569, cysteine 666, and histidine 670.

Belongs to the class-II aminoacyl-tRNA synthetase family. Requires Zn(2+) as cofactor.

The protein localises to the cytoplasm. The enzyme catalyses tRNA(Ala) + L-alanine + ATP = L-alanyl-tRNA(Ala) + AMP + diphosphate. Its function is as follows. Catalyzes the attachment of alanine to tRNA(Ala) in a two-step reaction: alanine is first activated by ATP to form Ala-AMP and then transferred to the acceptor end of tRNA(Ala). Also edits incorrectly charged Ser-tRNA(Ala) and Gly-tRNA(Ala) via its editing domain. This is Alanine--tRNA ligase from Methylibium petroleiphilum (strain ATCC BAA-1232 / LMG 22953 / PM1).